Here is a 1196-residue protein sequence, read N- to C-terminus: Probable cation-transporting ATPase 13A4 (1196 aa).

Residues 1–31 (MGHFEKGQHALLNEGEENEMEIFGYRTQGCR) are Cytoplasmic-facing. Residues 32–52 (KSLCLAGSIFSFGILPLVFYW) lie within the membrane without spanning it. Residues 53–197 (RPAWHVWAHC…DVEVTPIWKL (145 aa)) are Cytoplasmic-facing. The helical transmembrane segment at 198–218 (LIKEVLNPFYIFQLFSVCLWF) threads the bilayer. Over 219–223 (SEDYK) the chain is Lumenal. A helical transmembrane segment spans residues 224 to 244 (EYAFAIIIMSIISISLTVYDL). The Cytoplasmic portion of the chain corresponds to 245-400 (REQSVKLHHL…NFQLYRDAIR (156 aa)). A helical membrane pass occupies residues 401–421 (FLLCLVGTATIGMIYTLCVYV). Over 422–436 (LSGEPPEEVVRKALD) the chain is Lumenal. A helical membrane pass occupies residues 437-457 (VITIAVPPALPAALTTGIIYA). Residues 458–900 (QRRLKKRGIF…KEGRAALVTS (443 aa)) are Cytoplasmic-facing. Asp-486 functions as the 4-aspartylphosphate intermediate in the catalytic mechanism. Mg(2+)-binding residues include Asp-848 and Asp-852. A helical membrane pass occupies residues 901–921 (FCMFKYMALYSMIQYVGVLLL). The Lumenal portion of the chain corresponds to 922 to 932 (YWETNSLSNYQ). A helical membrane pass occupies residues 933–953 (FLFQDLAITTLIGVTMNLNGA). Residues 954–972 (YPKLVPFRPAGRLISPPLL) lie on the Cytoplasmic side of the membrane. A helical membrane pass occupies residues 973–993 (LSVIFNILLSLAMHIAGFILV). Over 994–1035 (QRQPWYSVEIHSACTVQNESISELTMSPTAPEKMESNSTFTS) the chain is Lumenal. The chain crosses the membrane as a helical span at residues 1036 to 1056 (FENTTVWFLGTINCITVALVF). Residues 1057 to 1070 (SKGKPFRQPTYTNY) are Cytoplasmic-facing. A helical transmembrane segment spans residues 1071 to 1091 (IFVLVLIIQLGVCLFILFADI). The Lumenal segment spans residues 1092-1109 (PELYRRLDLLCTPVLWRA). Residues 1110–1130 (SIVIMLSLNFIVSLVAEEAVI) traverse the membrane as a helical segment. Residues 1131 to 1196 (ENRALWMMIK…PVFESNEEQL (66 aa)) lie on the Cytoplasmic side of the membrane.

Belongs to the cation transport ATPase (P-type) (TC 3.A.3) family. Type V subfamily. Expressed in heart, placenta, liver, skeletal muscles, and pancreas. Lower levels of expression are also detected in brain, lung and kidney. Weakly expressed in the adult brain. Expression in fetal brain is higher than in adult brain, with levels similar to several other fetal tissues including spleen and skeletal muscle. In adult brain expressed at low levels in all tissues examined, including the temporal lobe and putamen. Highly expressed in the respiratory and integumentary systems.

The protein localises to the early endosome membrane. It localises to the late endosome membrane. The protein resides in the recycling endosome membrane. The catalysed reaction is ATP + H2O = ADP + phosphate + H(+). The protein is Probable cation-transporting ATPase 13A4 (ATP13A4) of Homo sapiens (Human).